A 303-amino-acid polypeptide reads, in one-letter code: MYYGFDIGGTKIALGVFDSGRQLQWEKRVPTPRDSYDAFLDAVCELVAEADQRFGCRGSVGIGIPGMPETEDGTLYAANVPAASGKPLRADLSARLDRDVRLDNDANCFALSEAWDDEFTQYPLVMGLILGTGVGGGLIFNGKPITGKSYITGEFGHMRLPVDALTMMGLDFPLRRCGCGQHGCIENYLSGRGFAWLYQHYYHQQLQAPEIIALYNQGDEQARAHVERYLDLLAVSLGNILTIVDPDLVVIGGGLSNFPAITTQLADRLPCHLLPVARVPRIERARHGDAGGMRGAAFLHLTD.

ATP-binding positions include Gly4–Lys11 and Gly133–Phe140. His157, Cys177, Cys179, and Cys184 together coordinate Zn(2+).

This sequence belongs to the ROK (NagC/XylR) family. NagK subfamily.

It carries out the reaction N-acetyl-D-glucosamine + ATP = N-acetyl-D-glucosamine 6-phosphate + ADP + H(+). Its pathway is cell wall biogenesis; peptidoglycan recycling. Catalyzes the phosphorylation of N-acetyl-D-glucosamine (GlcNAc) derived from cell-wall degradation, yielding GlcNAc-6-P. The polypeptide is N-acetyl-D-glucosamine kinase (Shigella boydii serotype 4 (strain Sb227)).